Here is a 348-residue protein sequence, read N- to C-terminus: Small ribosomal subunit protein mS45 (348 aa).

Residues 37 to 57 (SCSSSSPQSSQPTTHQQQCSS) show a composition bias toward low complexity. Residues 37-63 (SCSSSSPQSSQPTTHQQQCSSFSTTAP) form a disordered region.

The protein belongs to the mitochondrion-specific ribosomal protein mS45 family. As to quaternary structure, component of the mitochondrial small ribosomal subunit (mt-SSU). Mature N.crassa 74S mitochondrial ribosomes consist of a small (37S) and a large (54S) subunit. The 37S small subunit contains a 16S ribosomal RNA (16S mt-rRNA) and 32 different proteins. The 54S large subunit contains a 23S rRNA (23S mt-rRNA) and 42 different proteins.

It is found in the mitochondrion. Its function is as follows. Component of the mitochondrial ribosome (mitoribosome), a dedicated translation machinery responsible for the synthesis of mitochondrial genome-encoded proteins, including at least some of the essential transmembrane subunits of the mitochondrial respiratory chain. The mitoribosomes are attached to the mitochondrial inner membrane and translation products are cotranslationally integrated into the membrane. The chain is Small ribosomal subunit protein mS45 (mrps35) from Neurospora crassa (strain ATCC 24698 / 74-OR23-1A / CBS 708.71 / DSM 1257 / FGSC 987).